We begin with the raw amino-acid sequence, 153 residues long: ORM1-like protein 3 (153 aa).

Residues M1–M17 are important for ceramide level-sensing. Residues M1–G21 are Cytoplasmic-facing. The next 2 membrane-spanning stretches (helical) occupy residues I22–F42 and V43–F63. The Cytoplasmic segment spans residues L64–Q94. A helical transmembrane segment spans residues F95 to T117. At K118–Q121 the chain is on the extracellular side. The helical transmembrane segment at V122–L142 threads the bilayer. P137 is modified (hydroxyproline). Over H143–Y153 the chain is Cytoplasmic.

The protein belongs to the ORM family. In terms of assembly, ceramide-sensitive subunit of the serine palmitoyltransferase (SPT) complex, which is also composed of SPTLC1, SPTLC2/3 and SPTSSA/B. When hydroxylated at Pro-137, ubiquitinated via 'Lys-48'-linkage, leading to proteasomal degradation. In endothelial cells, ORMDL3 proteasomal degradation is controlled by the sphingosine 1-phosphate receptor signaling pathway.

It localises to the endoplasmic reticulum membrane. In terms of biological role, plays an essential role in the homeostatic regulation of sphingolipid de novo biosynthesis by modulating the activity of the serine palmitoyltransferase (SPT) in response to ceramide levels. When complexed to SPT, the binding of ceramides to its N-terminus stabilizes a conformation that block SPT substrate entry, hence preventing SPT catalytic activity. Through this mechanism, maintains ceramide levels at sufficient concentrations for the production of complex sphingolipids, but which prevents the accumulation of ceramides to levels that trigger apoptosis. The protein is ORM1-like protein 3 (Ormdl3) of Rattus norvegicus (Rat).